Reading from the N-terminus, the 347-residue chain is NADH-ubiquinone oxidoreductase chain 2 (347 aa).

10 consecutive transmembrane segments (helical) span residues 3-23 (PLTL…TVFS), 59-79 (YFLT…LNIL), 95-115 (PVLI…HFWV), 127-147 (GLIL…QISP), 149-169 (INPT…GWGG), 178-198 (ILAY…TFNP), 200-220 (TMVL…MMFM), 241-261 (VSTI…TGFI), 274-294 (GNII…YFYM), and 325-345 (LITP…ALSV).

Belongs to the complex I subunit 2 family. Core subunit of respiratory chain NADH dehydrogenase (Complex I) which is composed of 45 different subunits. Interacts with TMEM242.

Its subcellular location is the mitochondrion inner membrane. It catalyses the reaction a ubiquinone + NADH + 5 H(+)(in) = a ubiquinol + NAD(+) + 4 H(+)(out). In terms of biological role, core subunit of the mitochondrial membrane respiratory chain NADH dehydrogenase (Complex I) which catalyzes electron transfer from NADH through the respiratory chain, using ubiquinone as an electron acceptor. Essential for the catalytic activity and assembly of complex I. This Oryctolagus cuniculus (Rabbit) protein is NADH-ubiquinone oxidoreductase chain 2.